The following is a 214-amino-acid chain: Lazarillo protein (214 aa).

Positions 1–21 (MIRRGLLSVTAALVLLSVSCS) are cleaved as a signal peptide. N-linked (GlcNAc...) asparagine glycosylation is found at asparagine 38, asparagine 74, asparagine 84, asparagine 90, asparagine 130, asparagine 158, and asparagine 161. Alanine 192 carries GPI-anchor amidated alanine lipidation. Positions 193–214 (GAEHVVGAMLSVAIASLFALLH) are cleaved as a propeptide — removed in mature form.

The protein belongs to the calycin superfamily. Lipocalin family. Post-translationally, N-glycosylated. In terms of processing, contains disulfide bonds. Expressed by a subset of neuroblasts, ganglion mother cells and neurons of the CNS; by all sensory neurons of the PNS.

It localises to the cell membrane. In terms of biological role, putative role in axonal outgrowth and guidance, required for the navigation of identified commissural neurons. Could be a receptor the midline morphogen. In Schistocerca americana (American grasshopper), this protein is Lazarillo protein.